We begin with the raw amino-acid sequence, 180 residues long: Photosystem II extrinsic protein V (180 aa).

Residues 1-40 (MFSKAFSFQKVFAPARRRLLVLLLAALMAGFGWGLAPVFA) form the signal peptide. Heme c contacts are provided by C73, C76, H77, and H128.

It belongs to the cytochrome c family. PsbV subfamily. In terms of assembly, PSII is composed of 1 copy each of membrane proteins PsbA, PsbB, PsbC, PsbD, PsbE, PsbF, PsbH, PsbI, PsbJ, PsbK, PsbL, PsbM, PsbT, PsbX, PsbY, PsbZ, Psb30/Ycf12, peripheral proteins PsbO, CyanoQ (PsbQ), PsbU, PsbV and a large number of cofactors. It forms dimeric complexes. Requires heme c as cofactor.

Its subcellular location is the cellular thylakoid membrane. One of the extrinsic, lumenal subunits of photosystem II (PSII). PSII is a light-driven water plastoquinone oxidoreductase, using light energy to abstract electrons from H(2)O, generating a proton gradient subsequently used for ATP formation. The extrinsic proteins stabilize the structure of photosystem II oxygen-evolving complex (OEC), the ion environment of oxygen evolution and protect the OEC against heat-induced inactivation. Low-potential cytochrome c that plays a role in the OEC of PSII. This Synechococcus sp. (strain JA-2-3B'a(2-13)) (Cyanobacteria bacterium Yellowstone B-Prime) protein is Photosystem II extrinsic protein V.